The primary structure comprises 75 residues: Penaeidin-3m (75 aa).

A signal peptide spans 1–19 (MRLVVCLVFLASFALVCQG). A Pyrrolidone carboxylic acid modification is found at Q20. 3 disulfide bridges follow: C44-C59, C48-C66, and C60-C67. S74 is subject to Serine amide.

This sequence belongs to the penaeidin family.

It localises to the cytoplasmic granule. Its function is as follows. Antibacterial and antifungal activity. Presents chitin-binding activity. The sequence is that of Penaeidin-3m from Penaeus setiferus (Atlantic white shrimp).